The following is a 724-amino-acid chain: Hyperosmolality-gated Ca2+ permeable channel 3.1 (724 aa).

The Extracellular segment spans residues 1–4; the sequence is MEFG. Residues 5-25 form a helical membrane-spanning segment; it reads SFLVSLGTSFVIFVILMLLFT. Residues 26–85 lie on the Cytoplasmic side of the membrane; the sequence is WLSRKSGNAPIYYPNRILKGLEPWEGTSLTRNPFAWMREALTSSEQDVVNLSGVDTAVHF. The helical transmembrane segment at 86-108 threads the bilayer; the sequence is VFLSTVLGIFACSSLLLLPTLLP. Over 109–147 the chain is Extracellular; the sequence is LAATDNNIKNTKNATDTTSKGTFSQLDNLSMANITKKSS. Residues 148–170 traverse the membrane as a helical segment; sequence RLWAFLGAVYWISLVTYFFLWKA. Residues 171 to 358 lie on the Cytoplasmic side of the membrane; the sequence is YKHVSSLRAQ…WQNLNIKLFS (188 aa). Residues 241 to 309 are a coiled coil; the sequence is EKLEGYKKKL…KAVLAEKQQT (69 aa). Residues 359–385 traverse the membrane as a helical segment; sequence RIIRQYFIYFFVAVTILFYMIPIAFVS. The Extracellular portion of the chain corresponds to 386 to 411; that stretch reads AITTLKNLQRIIPFIKPVVEITAIRT. A helical membrane pass occupies residues 412 to 439; that stretch reads VLESFLPQIALIVFLAMLPKLLLFLSKA. Residues 440–448 are Cytoplasmic-facing; it reads EGIPSQSHA. A helical membrane pass occupies residues 449–472; it reads IRAASGKYFYFSVFNVFIGVTLAG. Over 473 to 497 the chain is Extracellular; that stretch reads TLFNTVKDIAKNPKLDMIINLLATS. The chain crosses the membrane as a helical span at residues 498–529; the sequence is LPKSATFFLTYVALKFFIGYGLELSRIIPLII. Residues 530–554 lie on the Cytoplasmic side of the membrane; that stretch reads FHLKKKYLCKTEAEVKEAWYPGDLS. The helical transmembrane segment at 555 to 574 threads the bilayer; the sequence is YATRVPGDMLILTITFCYSV. Residue Ile575 is a topological domain, extracellular. A helical transmembrane segment spans residues 576-594; it reads APLILIFGITYFGLGWLVL. Over 595–612 the chain is Cytoplasmic; the sequence is RNQALKVYVPSYESYGRM. A helical membrane pass occupies residues 613–636; the sequence is WPHIHQRILAALFLFQVVMFGYLG. Residues 637 to 641 lie on the Extracellular side of the membrane; that stretch reads AKTFF. The chain crosses the membrane as a helical span at residues 642 to 662; it reads YTALVIPLIITSLIFGYVCRQ. Over 663-724 the chain is Cytoplasmic; it reads KFYGGFEHTA…YQDFNAIAGV (62 aa).

The protein belongs to the CSC1 (TC 1.A.17) family. Homodimer.

Its subcellular location is the membrane. Its function is as follows. Acts as a hyperosmolarity-gated non-selective cation channel that permeates Ca(2+) ions. Mechanosensitive ion channel that converts mechanical stimuli into a flow of ions: activated in response to membrane stretch. Not activated in response to membrane poke. The chain is Hyperosmolality-gated Ca2+ permeable channel 3.1 from Arabidopsis thaliana (Mouse-ear cress).